The chain runs to 155 residues: Ferredoxin-6, chloroplastic (155 aa).

Residues Met1–Ala58 constitute a chloroplast transit peptide. The 2Fe-2S ferredoxin-type domain maps to His61–Glu152. Cys98, Cys103, Cys106, and Cys136 together coordinate [2Fe-2S] cluster.

It belongs to the 2Fe2S plant-type ferredoxin family. [2Fe-2S] cluster serves as cofactor.

Its subcellular location is the plastid. It localises to the chloroplast. In terms of biological role, ferredoxins are iron-sulfur proteins that transfer electrons in a wide variety of metabolic reactions. The chain is Ferredoxin-6, chloroplastic (FDX6) from Zea mays (Maize).